We begin with the raw amino-acid sequence, 213 residues long: Amelotin (213 aa).

The first 16 residues, 1–16 (MKTMILLLCLLGSAQS), serve as a signal peptide directing secretion. Disordered regions lie at residues 22-43 (NPAS…LPQQ) and 162-213 (GAKA…NRTQ). Positions 33–43 (TPGQVTPLPQQ) are enriched in polar residues. Residues 169–180 (GTTPGHVTTPGV) are compositionally biased toward low complexity.

The protein belongs to the amelotin family. In terms of processing, phosphorylated by FAM20C in vitro. O-glycosylated. As to expression, specifically expressed in maturation-stage ameloblasts.

It localises to the secreted. In terms of biological role, is a promoter of calcium phosphate mineralization, playing a critical role in the formation of the compact, mineralized, aprismatic enamel surface layer during the maturation stage of amelogenesis. In Mus musculus (Mouse), this protein is Amelotin (Amtn).